The primary structure comprises 556 residues: Undecaprenyl phosphate-alpha-4-amino-4-deoxy-L-arabinose arabinosyl transferase (556 aa).

11 helical membrane-spanning segments follow: residues 5 to 25 (MIKL…LLPL), 88 to 108 (FASV…ALLL), 116 to 136 (LLAA…TYSV), 179 to 199 (FMTK…PVAL), 207 to 227 (LLLF…PWAL), 258 to 278 (APFW…LALL), 296 to 316 (FLLL…KGKL), 319 to 339 (YILP…SGLA), 355 to 375 (LAFG…IIMP), 384 to 404 (LTIV…AVSL), and 410 to 430 (WGYL…GSIP).

This sequence belongs to the glycosyltransferase 83 family.

The protein localises to the cell inner membrane. The enzyme catalyses 4-amino-4-deoxy-alpha-L-arabinopyranosyl di-trans,octa-cis-undecaprenyl phosphate + lipid IVA = lipid IIA + di-trans,octa-cis-undecaprenyl phosphate.. The protein operates within lipopolysaccharide metabolism; 4-amino-4-deoxy-beta-L-arabinose-lipid A biosynthesis. Its function is as follows. Catalyzes the transfer of the L-Ara4N moiety of the glycolipid undecaprenyl phosphate-alpha-L-Ara4N to lipid A. The modified arabinose is attached to lipid A and is required for resistance to polymyxin and cationic antimicrobial peptides. The chain is Undecaprenyl phosphate-alpha-4-amino-4-deoxy-L-arabinose arabinosyl transferase from Pectobacterium carotovorum subsp. carotovorum (strain PC1).